The primary structure comprises 442 residues: Probable carboxypeptidase PABG_01461 (442 aa).

The signal sequence occupies residues M1–A20. N-linked (GlcNAc...) asparagine glycosylation is present at N102. D160 serves as a coordination point for Zn(2+). Catalysis depends on E192, which acts as the Proton acceptor. Residue E193 participates in Zn(2+) binding. Residue N343 is glycosylated (N-linked (GlcNAc...) asparagine).

It belongs to the peptidase M20A family. Requires Zn(2+) as cofactor.

It localises to the secreted. The sequence is that of Probable carboxypeptidase PABG_01461 from Paracoccidioides brasiliensis (strain Pb03).